Reading from the N-terminus, the 67-residue chain is Protein SlyX homolog (67 aa).

Belongs to the SlyX family.

The chain is Protein SlyX homolog from Thiobacillus denitrificans (strain ATCC 25259 / T1).